The chain runs to 440 residues: Putative sodium-coupled neutral amino acid transporter 8 (440 aa).

Helical transmembrane passes span 29–49, 58–78, 100–120, 156–176, 183–203, 223–243, 255–275, 300–320, 350–370, 373–393, and 418–438; these read AIFI…PWAF, AIMV…ILGY, IGKL…VAFL, FAIT…KEIS, ILGT…YYVM, MFSV…CVTI, WAAV…FTGI, VIIA…IILL, VVIT…VPDI, VISV…GLCL, and VVCG…EIIA.

It belongs to the amino acid/polyamine transporter 2 family.

It localises to the membrane. In terms of biological role, putative sodium-dependent amino acid/proton antiporter. The protein is Putative sodium-coupled neutral amino acid transporter 8 (slc38a8) of Xenopus tropicalis (Western clawed frog).